Reading from the N-terminus, the 443-residue chain is ATP-dependent protease ATPase subunit HslU (443 aa).

Residues Ile20, 62–67 (GVGKTE), Asp255, Glu321, and Arg393 each bind ATP.

This sequence belongs to the ClpX chaperone family. HslU subfamily. A double ring-shaped homohexamer of HslV is capped on each side by a ring-shaped HslU homohexamer. The assembly of the HslU/HslV complex is dependent on binding of ATP.

The protein localises to the cytoplasm. Functionally, ATPase subunit of a proteasome-like degradation complex; this subunit has chaperone activity. The binding of ATP and its subsequent hydrolysis by HslU are essential for unfolding of protein substrates subsequently hydrolyzed by HslV. HslU recognizes the N-terminal part of its protein substrates and unfolds these before they are guided to HslV for hydrolysis. The sequence is that of ATP-dependent protease ATPase subunit HslU from Helicobacter pylori (strain Shi470).